Reading from the N-terminus, the 281-residue chain is Inositol diphosphatase SIW14 (281 aa).

Residues 1–20 (MGLYQAKNDEGSDPKSSSKI) are disordered. The span at 7–20 (KNDEGSDPKSSSKI) shows a compositional bias: basic and acidic residues. Residue Ser94 is modified to Phosphoserine. A Tyrosine-protein phosphatase domain is found at 121–271 (NFSHVVGEIY…YDDDEIKRIA (151 aa)). 1D-myo-inositol hexakisphosphate-binding residues include Asn189, Ile190, and His193. The active-site Phosphocysteine intermediate is Cys214.

This sequence belongs to the protein-tyrosine phosphatase family. Atypical dual-specificity phosphatase Siw14-like subfamily. As to quaternary structure, monomer.

Its subcellular location is the cytoplasm. It catalyses the reaction 5-diphospho-1D-myo-inositol 1,2,3,4,6-pentakisphosphate + H2O = 1D-myo-inositol hexakisphosphate + phosphate + H(+). It carries out the reaction 5-diphospho-1D-myo-inositol 1,3,4,6-tetrakisphosphate + H2O = 1D-myo-inositol 1,3,4,5,6-pentakisphosphate + phosphate + H(+). The catalysed reaction is 3,5-bis(diphospho)-1D-myo-inositol 1,2,4,6-tetrakisphosphate + H2O = 3-diphospho-1D-myo-inositol 1,2,4,5,6-pentakisphosphate + phosphate + 2 H(+). The enzyme catalyses 1,5-bis(diphospho)-1D-myo-inositol 2,3,4,6-tetrakisphosphate + H2O = 1-diphospho-1D-myo-inositol 2,3,4,5,6-pentakisphosphate + phosphate + 2 H(+). It catalyses the reaction 6-diphospho-1D-myo-inositol pentakisphosphate + H2O = 1D-myo-inositol hexakisphosphate + phosphate + H(+). Selectively cleaves the beta-phosphate at the 5-position of soluble inositol pyrophosphates. Converts 5-diphosphoinositol tetrakisphosphate (5-PP-InsP(4)) into inositol pentakisphosphate (InsP(5)), 5-diphosphoinositol pentakisphosphate (5-PP-IP(5) or 5-InsP(7)) into inositol hexakisphosphate (IP(6) or InsP(6)), and 1,5-bisdiphosphoinositol tetrakisphosphate (1,5-PP-IP(5) or InsP(8)) into 1-diphosphoinositol pentakisphosphate (1-PP-IP(5) or 1-InsP(7)). Also has activity on 1,5-bis-diphosphoinositol 2,3,4,6-tetrakisphosphate (1,5-InsP(8)) and 3,5-InsP(8). Modulates inositol pyrophosphate metabolism that may have an influence in stress response. Plays a role in actin filament organization and endocytosis. Functions as a prion suppressing factor possibly due to its phosphatase activity against inositol pyrophosphates, which are signal transduction molecules involved in prion propagation. In Saccharomyces cerevisiae (strain ATCC 204508 / S288c) (Baker's yeast), this protein is Inositol diphosphatase SIW14 (SIW14).